We begin with the raw amino-acid sequence, 322 residues long: RING finger protein 113B (322 aa).

Residues 24 to 92 (KPGRKGAAGL…EEAAPESLDV (69 aa)) form a disordered region. Positions 46–60 (SSSSGDEGDTVAQPP) are enriched in low complexity. The segment at 190–218 (DYQPDICKDYKETGFCGFGDSCKFLHDRS) adopts a C3H1-type zinc-finger fold. An RING-type zinc finger spans residues 256 to 294 (CFICRQAFQNPVVTKCRHYFCESCALEHFRATPRCYICD).

The polypeptide is RING finger protein 113B (RNF113B) (Homo sapiens (Human)).